Reading from the N-terminus, the 191-residue chain is dTTP/UTP pyrophosphatase (191 aa).

Aspartate 69 functions as the Proton acceptor in the catalytic mechanism.

Belongs to the Maf family. YhdE subfamily. A divalent metal cation serves as cofactor.

Its subcellular location is the cytoplasm. It carries out the reaction dTTP + H2O = dTMP + diphosphate + H(+). It catalyses the reaction UTP + H2O = UMP + diphosphate + H(+). Nucleoside triphosphate pyrophosphatase that hydrolyzes dTTP and UTP. May have a dual role in cell division arrest and in preventing the incorporation of modified nucleotides into cellular nucleic acids. The polypeptide is dTTP/UTP pyrophosphatase (Desulforamulus reducens (strain ATCC BAA-1160 / DSM 100696 / MI-1) (Desulfotomaculum reducens)).